A 35-amino-acid polypeptide reads, in one-letter code: Cecropin-B (35 aa).

The residue at position 35 (Leu35) is a Leucine amide.

The protein belongs to the cecropin family.

Its subcellular location is the secreted. Its function is as follows. Cecropins have lytic and antibacterial activity against several Gram-positive and Gram-negative bacteria. This Antheraea pernyi (Chinese oak silk moth) protein is Cecropin-B.